Consider the following 115-residue polypeptide: Small ribosomal subunit protein uS13 (115 aa).

Positions 92–115 (RRGLPVRGQNTKNNARTRKGSKRK) are disordered. The segment covering 106-115 (ARTRKGSKRK) has biased composition (basic residues).

It belongs to the universal ribosomal protein uS13 family. In terms of assembly, part of the 30S ribosomal subunit. Forms a loose heterodimer with protein S19. Forms two bridges to the 50S subunit in the 70S ribosome.

Located at the top of the head of the 30S subunit, it contacts several helices of the 16S rRNA. In the 70S ribosome it contacts the 23S rRNA (bridge B1a) and protein L5 of the 50S subunit (bridge B1b), connecting the 2 subunits; these bridges are implicated in subunit movement. Contacts the tRNAs in the A and P-sites. The protein is Small ribosomal subunit protein uS13 of Lactobacillus gasseri (strain ATCC 33323 / DSM 20243 / BCRC 14619 / CIP 102991 / JCM 1131 / KCTC 3163 / NCIMB 11718 / NCTC 13722 / AM63).